Consider the following 1106-residue polypeptide: Carbamoyl phosphate synthase large chain (1106 aa).

The interval 1–402 (MPKREDLKSV…ALQKALRSLE (402 aa)) is carboxyphosphate synthetic domain. Residues Arg129, Arg169, Gly175, Gly176, Glu208, Ile210, Glu215, Gly241, Val242, His243, Gln285, and Glu299 each contribute to the ATP site. In terms of domain architecture, ATP-grasp 1 spans 133-328 (KGVVERCGAE…IAKIATKLSL (196 aa)). Residues Gln285, Glu299, and Asn301 each contribute to the Mg(2+) site. Residues Gln285, Glu299, and Asn301 each contribute to the Mn(2+) site. Residues 403 to 546 (QKGSQLDFGS…YHYSSYDQED (144 aa)) form an oligomerization domain region. Positions 547 to 956 (EIALHEKPSV…AFAKSQAAAN (410 aa)) are carbamoyl phosphate synthetic domain. Residues 677 to 868 (ARVLDIAGLI…LAKAAALIGT (192 aa)) enclose the ATP-grasp 2 domain. ATP contacts are provided by Arg713, Arg752, Leu754, Glu759, Gly784, Ile785, His786, Ser787, Gln827, and Glu839. Mg(2+) is bound by residues Gln827, Glu839, and Asn841. Residues Gln827, Glu839, and Asn841 each contribute to the Mn(2+) site. In terms of domain architecture, MGS-like spans 957 to 1106 (NALPTEGKVF…EALLEAAANV (150 aa)). An allosteric domain region spans residues 957–1106 (NALPTEGKVF…EALLEAAANV (150 aa)).

It belongs to the CarB family. In terms of assembly, composed of two chains; the small (or glutamine) chain promotes the hydrolysis of glutamine to ammonia, which is used by the large (or ammonia) chain to synthesize carbamoyl phosphate. Tetramer of heterodimers (alpha,beta)4. Requires Mg(2+) as cofactor. Mn(2+) is required as a cofactor.

It carries out the reaction hydrogencarbonate + L-glutamine + 2 ATP + H2O = carbamoyl phosphate + L-glutamate + 2 ADP + phosphate + 2 H(+). The catalysed reaction is hydrogencarbonate + NH4(+) + 2 ATP = carbamoyl phosphate + 2 ADP + phosphate + 2 H(+). Its pathway is amino-acid biosynthesis; L-arginine biosynthesis; carbamoyl phosphate from bicarbonate: step 1/1. It participates in pyrimidine metabolism; UMP biosynthesis via de novo pathway; (S)-dihydroorotate from bicarbonate: step 1/3. In terms of biological role, large subunit of the glutamine-dependent carbamoyl phosphate synthetase (CPSase). CPSase catalyzes the formation of carbamoyl phosphate from the ammonia moiety of glutamine, carbonate, and phosphate donated by ATP, constituting the first step of 2 biosynthetic pathways, one leading to arginine and/or urea and the other to pyrimidine nucleotides. The large subunit (synthetase) binds the substrates ammonia (free or transferred from glutamine from the small subunit), hydrogencarbonate and ATP and carries out an ATP-coupled ligase reaction, activating hydrogencarbonate by forming carboxy phosphate which reacts with ammonia to form carbamoyl phosphate. This chain is Carbamoyl phosphate synthase large chain, found in Renibacterium salmoninarum (strain ATCC 33209 / DSM 20767 / JCM 11484 / NBRC 15589 / NCIMB 2235).